Reading from the N-terminus, the 365-residue chain is Isopentenyl-diphosphate delta-isomerase (365 aa).

A substrate-binding site is contributed by 8–9 (RK). Residues 67 to 69 (SIT), Ser-97, and Asn-126 contribute to the FMN site. Position 97-99 (97-99 (SQR)) interacts with substrate. Gln-160 provides a ligand contact to substrate. Residue Glu-161 participates in Mg(2+) binding. FMN contacts are provided by residues Lys-192, Thr-222, 272–274 (GIR), and 293–294 (AL).

It belongs to the IPP isomerase type 2 family. As to quaternary structure, homooctamer. Dimer of tetramers. FMN is required as a cofactor. NADPH serves as cofactor. Requires Mg(2+) as cofactor.

Its subcellular location is the cytoplasm. The catalysed reaction is isopentenyl diphosphate = dimethylallyl diphosphate. Its function is as follows. Involved in the biosynthesis of isoprenoids. Catalyzes the 1,3-allylic rearrangement of the homoallylic substrate isopentenyl (IPP) to its allylic isomer, dimethylallyl diphosphate (DMAPP). This Methanosarcina barkeri (strain Fusaro / DSM 804) protein is Isopentenyl-diphosphate delta-isomerase.